A 969-amino-acid polypeptide reads, in one-letter code: Protein translocase subunit SecA (969 aa).

ATP is bound by residues Gln99, 117 to 121 (GEGKT), and Asp631.

It belongs to the SecA family. In terms of assembly, monomer and homodimer. Part of the essential Sec protein translocation apparatus which comprises SecA, SecYEG and auxiliary proteins SecDF. Other proteins may also be involved.

The protein localises to the cell inner membrane. It localises to the cytoplasm. It catalyses the reaction ATP + H2O + cellular proteinSide 1 = ADP + phosphate + cellular proteinSide 2.. In terms of biological role, part of the Sec protein translocase complex. Interacts with the SecYEG preprotein conducting channel. Has a central role in coupling the hydrolysis of ATP to the transfer of proteins into and across the cell membrane, serving as an ATP-driven molecular motor driving the stepwise translocation of polypeptide chains across the membrane. This Chlamydia abortus (strain DSM 27085 / S26/3) (Chlamydophila abortus) protein is Protein translocase subunit SecA.